The primary structure comprises 314 residues: UPF0761 membrane protein VP0125 (314 aa).

Transmembrane regions (helical) follow at residues 41-61, 104-124, 139-159, 185-205, 217-237, and 249-269; these read YLAY…LSIL, MSAV…SNID, LVFS…LVGA, FLRW…YILV, VGAA…ALYI, and ALAA…IVLL. Residues 295–314 are disordered; the sequence is ESQLANEGSESSDSANSTSQ.

The protein belongs to the UPF0761 family.

The protein resides in the cell inner membrane. The chain is UPF0761 membrane protein VP0125 from Vibrio parahaemolyticus serotype O3:K6 (strain RIMD 2210633).